A 249-amino-acid chain; its full sequence is 5'-nucleotidase SurE (249 aa).

A divalent metal cation-binding residues include Asp-9, Asp-10, Ser-40, and Asn-92.

The protein belongs to the SurE nucleotidase family. A divalent metal cation serves as cofactor.

The protein resides in the cytoplasm. The catalysed reaction is a ribonucleoside 5'-phosphate + H2O = a ribonucleoside + phosphate. Functionally, nucleotidase that shows phosphatase activity on nucleoside 5'-monophosphates. The polypeptide is 5'-nucleotidase SurE (Shewanella loihica (strain ATCC BAA-1088 / PV-4)).